The primary structure comprises 201 residues: Superoxide dismutase [Mn] (201 aa).

Mn(2+)-binding residues include H27, H81, D163, and H167.

This sequence belongs to the iron/manganese superoxide dismutase family. As to quaternary structure, homodimer. Requires Mn(2+) as cofactor.

The protein resides in the secreted. It carries out the reaction 2 superoxide + 2 H(+) = H2O2 + O2. Its function is as follows. Destroys superoxide anion radicals which are normally produced within the cells and which are toxic to biological systems. In Streptococcus pyogenes serotype M1, this protein is Superoxide dismutase [Mn] (sodA).